The sequence spans 547 residues: Chaperonin GroEL (547 aa).

ATP contacts are provided by residues 30 to 33 (TLGP), Lys-51, 87 to 91 (DGTTT), Gly-415, and Asp-496.

This sequence belongs to the chaperonin (HSP60) family. In terms of assembly, forms a cylinder of 14 subunits composed of two heptameric rings stacked back-to-back. Interacts with the co-chaperonin GroES.

Its subcellular location is the cytoplasm. The catalysed reaction is ATP + H2O + a folded polypeptide = ADP + phosphate + an unfolded polypeptide.. In terms of biological role, together with its co-chaperonin GroES, plays an essential role in assisting protein folding. The GroEL-GroES system forms a nano-cage that allows encapsulation of the non-native substrate proteins and provides a physical environment optimized to promote and accelerate protein folding. The protein is Chaperonin GroEL of Chlorobium limicola (strain DSM 245 / NBRC 103803 / 6330).